Consider the following 325-residue polypeptide: uncharacterized protein (325 aa).

Residues methionine 1 to glutamine 75 are disordered. Pro residues predominate over residues tyrosine 24–tyrosine 70. 4 helical membrane-spanning segments follow: residues alanine 96–alanine 116, isoleucine 153–isoleucine 173, leucine 205–phenylalanine 225, and leucine 273–isoleucine 293.

The protein to M.tuberculosis Rv2560.

Its subcellular location is the cell membrane. This is an uncharacterized protein from Mycobacterium bovis (strain ATCC BAA-935 / AF2122/97).